A 143-amino-acid polypeptide reads, in one-letter code: Transcriptional regulator MraZ (143 aa).

SpoVT-AbrB domains lie at 5–47 (EFRH…PMKE) and 76–119 (ATEC…DEAR).

The protein belongs to the MraZ family. As to quaternary structure, forms oligomers.

It is found in the cytoplasm. Its subcellular location is the nucleoid. The sequence is that of Transcriptional regulator MraZ from Enterococcus hirae.